A 501-amino-acid polypeptide reads, in one-letter code: Cytochrome P450 2J4 (501 aa).

2 helical membrane-spanning segments follow: residues 12–32 (IWAALHLRTLLVAALTFLLLA) and 77–97 (NIFSLNLGDITSVVITGLPLI). Cys447 serves as a coordination point for heme.

Belongs to the cytochrome P450 family. The cofactor is heme. In terms of tissue distribution, expressed in small intestinal enterocytes (at protein level). In the intestinal crypt, expressed at higher levels in the mature villous cells than in undifferentiated crypt cells (at protein level). Expressed in liver, kidney, lung, and olfactory mucosa (at protein level).

It is found in the endoplasmic reticulum membrane. Its subcellular location is the microsome membrane. It carries out the reaction an organic molecule + reduced [NADPH--hemoprotein reductase] + O2 = an alcohol + oxidized [NADPH--hemoprotein reductase] + H2O + H(+). The catalysed reaction is (5Z,8Z,11Z,14Z)-eicosatetraenoate + reduced [NADPH--hemoprotein reductase] + O2 = 19-hydroxy-(5Z,8Z,11Z,14Z)-eicosatetraenoate + oxidized [NADPH--hemoprotein reductase] + H2O + H(+). The enzyme catalyses all-trans-retinal + reduced [NADPH--hemoprotein reductase] + O2 = all-trans-retinoate + oxidized [NADPH--hemoprotein reductase] + H2O + 2 H(+). It catalyses the reaction 9-cis-retinal + reduced [NADPH--hemoprotein reductase] + O2 = 9-cis-retinoate + oxidized [NADPH--hemoprotein reductase] + H2O + 2 H(+). It participates in lipid metabolism; arachidonate metabolism. Its pathway is cofactor metabolism; retinol metabolism. Functionally, a cytochrome P450 monooxygenase that may play a major role in intestinal retinoid metabolism. Catalyzes the oxidative transformation of all-trans retinal and 9-cis-retinal to the corresponding active forms all-trans and 9-cis retinoic acids. Catalyzes the hydroxylation of carbon-hydrogen bonds. Hydroxylates arachidonic acid predominantly at the omega-1 position. Mechanistically, uses molecular oxygen inserting one oxygen atom into a substrate, and reducing the second into a water molecule, with two electrons provided by NADPH via cytochrome P450 reductase (CPR; NADPH--hemoprotein reductase). This chain is Cytochrome P450 2J4, found in Rattus norvegicus (Rat).